We begin with the raw amino-acid sequence, 155 residues long: Small ribosomal subunit protein uS7c (155 aa).

This sequence belongs to the universal ribosomal protein uS7 family. In terms of assembly, part of the 30S ribosomal subunit.

The protein localises to the plastid. The protein resides in the chloroplast. In terms of biological role, one of the primary rRNA binding proteins, it binds directly to 16S rRNA where it nucleates assembly of the head domain of the 30S subunit. In Allium textile (Textile onion), this protein is Small ribosomal subunit protein uS7c (rps7).